Here is a 446-residue protein sequence, read N- to C-terminus: Exopolygalacturonase (446 aa).

Residues Met1 to Ala17 form the signal peptide. Asn53, Asn118, Asn134, and Asn204 each carry an N-linked (GlcNAc...) asparagine glycan. A PbH1 1 repeat occupies Ser236–Pro257. Catalysis depends on Asp250, which acts as the Proton donor. Cysteines 252 and 269 form a disulfide. N-linked (GlcNAc...) asparagine glycosylation is found at Asn258 and Asn270. 3 PbH1 repeats span residues Ser259–Ser279, Val290–Val311, and Val332–Gln353. His273 is an active-site residue. N-linked (GlcNAc...) asparagine glycosylation is found at Asn297, Asn302, Asn334, Asn359, and Asn369. 2 PbH1 repeats span residues Pro367–Ser398 and Cys403–Val434. Intrachain disulfides connect Cys397-Cys403 and Cys424-Cys436. Asn435 carries N-linked (GlcNAc...) asparagine glycosylation.

Belongs to the glycosyl hydrolase 28 family.

The protein localises to the secreted. It carries out the reaction [(1-&gt;4)-alpha-D-galacturonosyl](n) + H2O = alpha-D-galacturonate + [(1-&gt;4)-alpha-D-galacturonosyl](n-1). In terms of biological role, hydrolysis of 1,4-alpha-D-galactosiduronic linkages in pectate and other galacturonans. This Cochliobolus carbonum (Maize leaf spot fungus) protein is Exopolygalacturonase (PGX1).